Reading from the N-terminus, the 158-residue chain is ATP synthase subunit b', chloroplastic (158 aa).

The chain crosses the membrane as a helical span at residues 21 to 41; it reads GTLPLMALQFLILMLLLNTIF.

The protein belongs to the ATPase B chain family. F-type ATPases have 2 components, F(1) - the catalytic core - and F(0) - the membrane proton channel. F(1) has five subunits: alpha(3), beta(3), gamma(1), delta(1), epsilon(1). F(0) has four main subunits: a(1), b(1), b'(1) and c(10-14). The alpha and beta chains form an alternating ring which encloses part of the gamma chain. F(1) is attached to F(0) by a central stalk formed by the gamma and epsilon chains, while a peripheral stalk is formed by the delta, b and b' chains.

The protein localises to the plastid. It is found in the chloroplast thylakoid membrane. In terms of biological role, f(1)F(0) ATP synthase produces ATP from ADP in the presence of a proton or sodium gradient. F-type ATPases consist of two structural domains, F(1) containing the extramembraneous catalytic core and F(0) containing the membrane proton channel, linked together by a central stalk and a peripheral stalk. During catalysis, ATP synthesis in the catalytic domain of F(1) is coupled via a rotary mechanism of the central stalk subunits to proton translocation. Its function is as follows. Component of the F(0) channel, it forms part of the peripheral stalk, linking F(1) to F(0). The b'-subunit is a diverged and duplicated form of b found in plants and photosynthetic bacteria. This chain is ATP synthase subunit b', chloroplastic, found in Porphyra purpurea (Red seaweed).